Here is an 85-residue protein sequence, read N- to C-terminus: Cysteine-rich venom protein 1 (85 aa).

The signal sequence occupies residues 1 to 21; sequence MCRYALIVLVVVVVATNLSEA. 5 cysteine pairs are disulfide-bonded: Cys29–Cys63, Cys38–Cys59, Cys42–Cys53, Cys46–Cys84, and Cys65–Cys78. The 56-residue stretch at 29 to 84 folds into the TIL domain; the sequence is CEPNRIYKTCGPACPPTCEDPDPDCNETPQCKAGCFCIPGLIENMKGGNCISPSLC.

It belongs to the serine protease inhibitor-like (TIL domain-containing) family. In terms of tissue distribution, expressed by the venom gland.

The protein localises to the secreted. In terms of biological role, may be a phenoloxidase inhibitor that stabilizes or inhibits venom phenoloxidase while it is stored in the venom sac. In Pimpla hypochondriaca (Parasitoid wasp), this protein is Cysteine-rich venom protein 1.